We begin with the raw amino-acid sequence, 253 residues long: Vitamin B12 import ATP-binding protein BtuD (253 aa).

An ABC transporter domain is found at 4-236 (LQLNNVSVGT…DVLSQVFEVD (233 aa)). ATP is bound at residue 32 to 39 (GPNGAGKS).

It belongs to the ABC transporter superfamily. Vitamin B12 importer (TC 3.A.1.13.1) family. As to quaternary structure, the complex is composed of two ATP-binding proteins (BtuD), two transmembrane proteins (BtuC) and a solute-binding protein (BtuF).

The protein localises to the cell inner membrane. The enzyme catalyses an R-cob(III)alamin(out) + ATP + H2O = an R-cob(III)alamin(in) + ADP + phosphate + H(+). In terms of biological role, part of the ABC transporter complex BtuCDF involved in vitamin B12 import. Responsible for energy coupling to the transport system. The chain is Vitamin B12 import ATP-binding protein BtuD from Yersinia pestis.